A 230-amino-acid polypeptide reads, in one-letter code: Uracil-DNA glycosylase (230 aa).

Asp65 (proton acceptor) is an active-site residue.

It belongs to the uracil-DNA glycosylase (UDG) superfamily. UNG family.

It localises to the cytoplasm. It catalyses the reaction Hydrolyzes single-stranded DNA or mismatched double-stranded DNA and polynucleotides, releasing free uracil.. Excises uracil residues from the DNA which can arise as a result of misincorporation of dUMP residues by DNA polymerase or due to deamination of cytosine. The chain is Uracil-DNA glycosylase from Lactiplantibacillus plantarum (strain ATCC BAA-793 / NCIMB 8826 / WCFS1) (Lactobacillus plantarum).